We begin with the raw amino-acid sequence, 614 residues long: tRNA uridine 5-carboxymethylaminomethyl modification enzyme MnmG (614 aa).

10–15 serves as a coordination point for FAD; that stretch reads GAGHAG. 271–285 contacts NAD(+); that stretch reads GPRYCPSIEDKIVKF.

It belongs to the MnmG family. Homodimer. Heterotetramer of two MnmE and two MnmG subunits. The cofactor is FAD.

It localises to the cytoplasm. NAD-binding protein involved in the addition of a carboxymethylaminomethyl (cmnm) group at the wobble position (U34) of certain tRNAs, forming tRNA-cmnm(5)s(2)U34. The sequence is that of tRNA uridine 5-carboxymethylaminomethyl modification enzyme MnmG from Ureaplasma parvum serovar 3 (strain ATCC 27815 / 27 / NCTC 11736).